The chain runs to 347 residues: Aspartate-semialdehyde dehydrogenase (347 aa).

Residues 13 to 16 (TGAV) and 41 to 42 (RS) contribute to the NADP(+) site. Phosphate is bound at residue arginine 101. Cysteine 132 (acyl-thioester intermediate) is an active-site residue. Residue glutamine 159 participates in substrate binding. Residue 162–163 (SG) coordinates NADP(+). Lysine 216 lines the phosphate pocket. A substrate-binding site is contributed by arginine 238. Histidine 245 functions as the Proton acceptor in the catalytic mechanism. Asparagine 319 is a binding site for NADP(+).

This sequence belongs to the aspartate-semialdehyde dehydrogenase family. In terms of assembly, homodimer.

It catalyses the reaction L-aspartate 4-semialdehyde + phosphate + NADP(+) = 4-phospho-L-aspartate + NADPH + H(+). The protein operates within amino-acid biosynthesis; L-lysine biosynthesis via DAP pathway; (S)-tetrahydrodipicolinate from L-aspartate: step 2/4. It functions in the pathway amino-acid biosynthesis; L-methionine biosynthesis via de novo pathway; L-homoserine from L-aspartate: step 2/3. Its pathway is amino-acid biosynthesis; L-threonine biosynthesis; L-threonine from L-aspartate: step 2/5. Catalyzes the NADPH-dependent formation of L-aspartate-semialdehyde (L-ASA) by the reductive dephosphorylation of L-aspartyl-4-phosphate. The polypeptide is Aspartate-semialdehyde dehydrogenase (Legionella pneumophila).